The chain runs to 122 residues: Large ribosomal subunit protein uL14 (122 aa).

Belongs to the universal ribosomal protein uL14 family. In terms of assembly, part of the 50S ribosomal subunit. Forms a cluster with proteins L3 and L19. In the 70S ribosome, L14 and L19 interact and together make contacts with the 16S rRNA in bridges B5 and B8.

Its function is as follows. Binds to 23S rRNA. Forms part of two intersubunit bridges in the 70S ribosome. The polypeptide is Large ribosomal subunit protein uL14 (Nitratiruptor sp. (strain SB155-2)).